A 1442-amino-acid polypeptide reads, in one-letter code: MEEEQQQQQQQQQAQKMQGTEQSAQLPPSAPGALPALVTGLQGTEANALQHKIKNSICKSIQSKVDCILQEVEKFTDLEKLFLYLKLPSGPSNVEKSDQNSLSSSRAQQTHAFSWIRNTLEEHPETSLPKQEVYDEYKSYCDNLGYHPLSAADFGKIMKNVFPNMKARRLGTRGKSKYCYSGLRKKAFVHMPSLPNLDFNTSGDGLDGIEVSTLLQSADEEVVSAACRLVCEWAQKVLSQPFDSVLDLARFLVKSHYIGTKSMAALTVMAGDSAGLKGITQTSAFVPMSESNSFHPQVRNLTSQVDAKQQLQRKIQKKQQEQKLQSPLPGELQVKKQDGTASNGITNICNGSPAILSPQPIGIVVAAVQSPIPVQRNRPLVTSPSPIGSSEGKVLPLNVQVVTQHMQSVKPKTPQNIPASPVGDRSARHRYPQILPKPASSNALTIRSPTTVVFTSSPIKTVVPTPHVSSLNVVKMTTISLAPSSAGTTVKQTSNNSTSATDETRTGPQIKNGSVVSLQSPVPRVGTPVASSVEVKTEPEIVSEDTAVRCQKSPDSSKVQKRTLMSFTHKGNQESVTSKLSHDATRDQAVKSIDHRAEGTRTKCKSRSVEGINVSSTGSNQSTLTLCVAPRTLFNNRSSQNTNGDQGVKDVRMCTKSPRKRLPTTGQESPIPPAKKSLLGQLPSECPAPEGIAIKKIPKTLSAKNDDAVTLALVPSKETEGNNTTLAANYSLSCVAEAPSDTPQELVASSQDVNLKLEGNVFKFVNESKSDNPFSQDAWQQIAEDADFPSSNCEQTQTIGVLDMSGTSGADNLQKPVWDTVDFEGIQQDTYSQQLEDSSLNQLQAHSSNQLPQRSDMTDPSFFSFDDDLTQDSIVEELVLMEEQMSMNNNPQNYGNLGMVLQNQSTASHGTPVPTHPGSAHFYHSVHSSVTPVHTPTPTPTPTPTLTPTPTSEMMCGTQSLSRESPCSRLAQTTPVDSALGSSRHTPVGTPHSNCSSSVPPSPVECRNPFAFTPISASISYDASIVSSSPVKPMQRPMATHPDKTKLEWMNNGYSSVVNPSISSHGILQSYKELDSFRKPHAFAVPGQSYQSQSRHHDNHFGRLTPVSPVQHQLSIINNASKQEGFAVPAPLDNKSTNSSGNSNFRCRSVSPAVHRQRNLSGNTNCPVSNVPQSNMTAFGTLVAPEIQSILNNIQPDSANSIAQRSQSVPLTVMMQTAFPSLQKQSNTQNITHVLLSKLDSDRDDAVRGLGINNLPSNYTARMNLTQILETSPMFSGASQQNILNSSSSSYEFQTPSYLTKNNSSEQISFTPGENQAQADDIGEQQLDFSSTVKDLLDGDSLQTNQQLVVQVASELNNASDFSSDIRLSSELSGSINDLNTLDPNLLFDPGRQPGQDEDATLEELNNDPLFQQICNESINSMTSSGFEWMESKDHPTVEMLG.

The segment at 1–36 is disordered; sequence MEEEQQQQQQQQQAQKMQGTEQSAQLPPSAPGALPA. The RFX-type winged-helix DNA-binding region spans 112–187; it reads AFSWIRNTLE…YCYSGLRKKA (76 aa). Positions 192 to 197 match the PxLPxI/L motif motif; sequence PSLPNL. 3 disordered regions span residues 406–426, 485–514, and 929–1001; these read MQSV…GDRS, SAGT…KNGS, and SVTP…SVPP. A compositionally biased stretch (pro residues) spans 935–947; sequence TPTPTPTPTPTLT. Over residues 957 to 995 the composition is skewed to polar residues; it reads GTQSLSRESPCSRLAQTTPVDSALGSSRHTPVGTPHSNC.

Belongs to the RFX family.

It is found in the nucleus. Functionally, transcription factor. Acts as a transcriptional activator by binding to promoter regions of target genes. Plays a role in natural killer (NK) cell maintenance and immunity. Plays a role in the process of ciliogenesis in the neural tube and neural tube closure by regulating the expression of RFX4. In Xenopus laevis (African clawed frog), this protein is DNA-binding protein RFX7.